The primary structure comprises 78 residues: Acyl carrier protein (78 aa).

One can recognise a Carrier domain in the interval 2-77 (SDILERVRKI…DAVKFITEKT (76 aa)). S37 bears the O-(pantetheine 4'-phosphoryl)serine mark.

This sequence belongs to the acyl carrier protein (ACP) family. 4'-phosphopantetheine is transferred from CoA to a specific serine of apo-ACP by AcpS. This modification is essential for activity because fatty acids are bound in thioester linkage to the sulfhydryl of the prosthetic group.

It localises to the cytoplasm. The protein operates within lipid metabolism; fatty acid biosynthesis. Its function is as follows. Carrier of the growing fatty acid chain in fatty acid biosynthesis. This is Acyl carrier protein from Caulobacter vibrioides (strain ATCC 19089 / CIP 103742 / CB 15) (Caulobacter crescentus).